The following is a 240-amino-acid chain: Peptidyl-tRNA hydrolase 2 (240 aa).

Y60 contacts tRNA. H65 acts as the Proton acceptor in catalysis. Positions 111, 113, and 159 each coordinate tRNA.

Belongs to the PTH family. Monomer.

The protein resides in the cytoplasm. The enzyme catalyses an N-acyl-L-alpha-aminoacyl-tRNA + H2O = an N-acyl-L-amino acid + a tRNA + H(+). Its function is as follows. Hydrolyzes ribosome-free peptidyl-tRNAs (with 1 or more amino acids incorporated), which drop off the ribosome during protein synthesis, or as a result of ribosome stalling. In terms of biological role, catalyzes the release of premature peptidyl moieties from peptidyl-tRNA molecules trapped in stalled 50S ribosomal subunits, and thus maintains levels of free tRNAs and 50S ribosomes. The chain is Peptidyl-tRNA hydrolase 2 from Corynebacterium jeikeium (strain K411).